We begin with the raw amino-acid sequence, 891 residues long: Longitudinals lacking protein, isoform G (891 aa).

The BTB domain maps to 32–97 (VDCTLAAEGK…MYRGEVNISQ (66 aa)). Disordered stretches follow at residues 115 to 200 (LSDN…SSVL) and 228 to 340 (SSGP…ASAS). Phosphoserine is present on Ser140. Thr161 bears the Phosphothreonine mark. Phosphoserine occurs at positions 162 and 168. 4 stretches are compositionally biased toward low complexity: residues 162-175 (SGDVSGSREGSSSP), 228-251 (SSGPAAGTSSQASSTQQQQPLTST), 263-293 (TSSTAAPASGASASAAVQQAHLHQQQAQTTS), and 329-340 (NSATGPNPASAS). Ser372, Ser375, and Ser378 each carry phosphoserine. The interval 446–467 (QDAQQRDPQDLSRKENTAPDVA) is disordered. Basic and acidic residues predominate over residues 449–462 (QQRDPQDLSRKENT). Residues Ser696 and Ser705 each carry the phosphoserine modification. The residue at position 706 (Thr706) is a Phosphothreonine. 2 positions are modified to phosphoserine: Ser749 and Ser750. The C2H2-type 1; degenerate zinc-finger motif lies at 791–813 (YECRHCGKKYRWKSTLRRHENVE). A C2H2-type 2 zinc finger spans residues 821–843 (HQCPYCPYKSKQRGNLGVHVRKH). The segment at 840–891 (VRKHHTDLPQLPSKRRSKYSMNRENGMSGSMSDDSQGKLIIDFNGKGELETK) is disordered. At Ser874 the chain carries Phosphoserine.

In terms of tissue distribution, expressed in both mesoderm and ectoderm with expression highest in the mesectoderm by stage 11. Becomes enriched in a cluster of brain cells, in abdominal histoblasts, and in the embryonic imaginal disks during later stages.

It localises to the nucleus. Functionally, putative transcription factor required for axon growth and guidance in the central and peripheral nervous systems. Repels CNS axons away from the midline by promoting the expression of the midline repellent sli and its receptor robo. The sequence is that of Longitudinals lacking protein, isoform G from Drosophila melanogaster (Fruit fly).